The sequence spans 1308 residues: Tau-tubulin kinase 1 (1308 aa).

Residues 34 to 297 (WKVLKKIGGG…LIMSVFENSM (264 aa)) enclose the Protein kinase domain. Residues 40–48 (IGGGGFGEI) and Lys-63 each bind ATP. The active-site Proton acceptor is the Asp-154. Disordered stretches follow at residues 364–397 (LSDQ…GPEA), 418–448 (PCVE…PVRS), 474–671 (ERRS…APPF), 720–899 (QVPL…AGGG), 985–1085 (EMES…LARL), and 1097–1308 (RLAS…PGAR). Ser-441 is modified (phosphoserine). A compositionally biased stretch (polar residues) spans 485-496 (PSRQACSSQPAQ). Ser-541 carries the post-translational modification Phosphoserine. Composition is skewed to basic and acidic residues over residues 541–555 (SKEW…ELKD) and 574–589 (ELRP…RRLG). Residues 638–647 (SPSHSPLHSG) show a composition bias toward low complexity. A compositionally biased stretch (acidic residues) spans 735–769 (GEEEEEEEEEEEEEEEEEEEEEEEEEEEEEEEEEA). Residues 786–795 (GSERSTERSQ) show a composition bias toward basic and acidic residues. Polar residues-rich tracts occupy residues 868 to 885 (PTGS…SSIL) and 1020 to 1035 (ASQQ…TISP). Low complexity predominate over residues 1097 to 1107 (RLASGASSSSS).

It belongs to the protein kinase superfamily. CK1 Ser/Thr protein kinase family. Mg(2+) serves as cofactor. Requires Mn(2+) as cofactor. In terms of tissue distribution, expressed in the brain. Strong expression in the cortical layers, the CA1 layers of the hippocampus and the granular layer of the cerebellum. Also expressed in the large cortical pyramidal cells in the temporal cortex, the CA1 pyramidal neurons and the cerebellum granular neurons.

The protein localises to the cytoplasm. The catalysed reaction is L-seryl-[protein] + ATP = O-phospho-L-seryl-[protein] + ADP + H(+). It carries out the reaction L-threonyl-[protein] + ATP = O-phospho-L-threonyl-[protein] + ADP + H(+). Serine/threonine kinase which is able to phosphorylate TAU on serine, threonine and tyrosine residues. Induces aggregation of TAU. This Mus musculus (Mouse) protein is Tau-tubulin kinase 1 (Ttbk1).